The primary structure comprises 277 residues: Putative thiosulfate sulfurtransferase (277 aa).

Rhodanese domains lie at 18 to 125 and 154 to 274; these read HAPK…PLSS and AINV…APIE. Cysteine 233 (cysteine persulfide intermediate) is an active-site residue. Arginine 238 is a binding site for substrate.

It catalyses the reaction thiosulfate + hydrogen cyanide = thiocyanate + sulfite + 2 H(+). May be a sulfotransferase involved in the formation of thiosulfate. The protein is Putative thiosulfate sulfurtransferase (cysA1) of Mycobacterium tuberculosis (strain CDC 1551 / Oshkosh).